The primary structure comprises 119 residues: Small ribosomal subunit protein uS13 (119 aa).

The segment at 92-119 (RRGLPVRGQRTKTNARTRKGPRKAIRAR) is disordered.

It belongs to the universal ribosomal protein uS13 family. As to quaternary structure, part of the 30S ribosomal subunit. Forms a loose heterodimer with protein S19. Forms two bridges to the 50S subunit in the 70S ribosome.

In terms of biological role, located at the top of the head of the 30S subunit, it contacts several helices of the 16S rRNA. In the 70S ribosome it contacts the 23S rRNA (bridge B1a) and protein L5 of the 50S subunit (bridge B1b), connecting the 2 subunits; these bridges are implicated in subunit movement. Contacts the tRNAs in the A and P-sites. This Nitrosomonas eutropha (strain DSM 101675 / C91 / Nm57) protein is Small ribosomal subunit protein uS13.